Reading from the N-terminus, the 188-residue chain is dCTP deaminase (188 aa).

DCTP contacts are provided by residues 111-116, 135-137, glutamine 156, tyrosine 170, and glutamine 180; these read KSTYAR and TLE. The active-site Proton donor/acceptor is the glutamate 137.

The protein belongs to the dCTP deaminase family. Homotrimer.

It carries out the reaction dCTP + H2O + H(+) = dUTP + NH4(+). Its pathway is pyrimidine metabolism; dUMP biosynthesis; dUMP from dCTP (dUTP route): step 1/2. Catalyzes the deamination of dCTP to dUTP. This chain is dCTP deaminase, found in Azotobacter vinelandii (strain DJ / ATCC BAA-1303).